The primary structure comprises 103 residues: Co-chaperonin GroES (103 aa).

Belongs to the GroES chaperonin family. Heptamer of 7 subunits arranged in a ring. Interacts with the chaperonin GroEL.

The protein localises to the cytoplasm. Together with the chaperonin GroEL, plays an essential role in assisting protein folding. The GroEL-GroES system forms a nano-cage that allows encapsulation of the non-native substrate proteins and provides a physical environment optimized to promote and accelerate protein folding. GroES binds to the apical surface of the GroEL ring, thereby capping the opening of the GroEL channel. This Synechococcus sp. (strain JA-2-3B'a(2-13)) (Cyanobacteria bacterium Yellowstone B-Prime) protein is Co-chaperonin GroES.